A 429-amino-acid chain; its full sequence is Glutamate-1-semialdehyde 2,1-aminomutase (429 aa).

Lysine 265 is subject to N6-(pyridoxal phosphate)lysine.

This sequence belongs to the class-III pyridoxal-phosphate-dependent aminotransferase family. HemL subfamily. In terms of assembly, homodimer. Requires pyridoxal 5'-phosphate as cofactor.

Its subcellular location is the cytoplasm. It catalyses the reaction (S)-4-amino-5-oxopentanoate = 5-aminolevulinate. The protein operates within porphyrin-containing compound metabolism; protoporphyrin-IX biosynthesis; 5-aminolevulinate from L-glutamyl-tRNA(Glu): step 2/2. This Azotobacter vinelandii (strain DJ / ATCC BAA-1303) protein is Glutamate-1-semialdehyde 2,1-aminomutase.